Here is an 88-residue protein sequence, read N- to C-terminus: Large ribosomal subunit protein bL27 (88 aa).

Positions 1 to 21 are disordered; that stretch reads MAHKKGASSSRNGRDSNAQRL. Residues 7–19 are compositionally biased toward polar residues; that stretch reads ASSSRNGRDSNAQ.

It belongs to the bacterial ribosomal protein bL27 family.

The chain is Large ribosomal subunit protein bL27 from Frankia casuarinae (strain DSM 45818 / CECT 9043 / HFP020203 / CcI3).